A 336-amino-acid chain; its full sequence is Phospho-N-acetylmuramoyl-pentapeptide-transferase (336 aa).

The next 10 helical transmembrane spans lie at 3 to 23 (LTLI…PYFI), 53 to 73 (GGTV…LFSI), 78 to 98 (SLAL…IGFL), 118 to 138 (LALQ…PSGI), 143 to 163 (VFGY…FWVV), 174 to 194 (GIDG…GVIA), 200 to 220 (FDVL…FCFN), 226 to 246 (VFMG…ISIA), 251 to 271 (WTLL…MLQV), and 316 to 336 (AFLW…LYVF).

The protein belongs to the glycosyltransferase 4 family. MraY subfamily. Requires Mg(2+) as cofactor.

The protein resides in the cell membrane. The enzyme catalyses UDP-N-acetyl-alpha-D-muramoyl-L-alanyl-gamma-D-glutamyl-L-lysyl-D-alanyl-D-alanine + di-trans,octa-cis-undecaprenyl phosphate = Mur2Ac(oyl-L-Ala-gamma-D-Glu-L-Lys-D-Ala-D-Ala)-di-trans,octa-cis-undecaprenyl diphosphate + UMP. It participates in cell wall biogenesis; peptidoglycan biosynthesis. Its function is as follows. Catalyzes the initial step of the lipid cycle reactions in the biosynthesis of the cell wall peptidoglycan: transfers peptidoglycan precursor phospho-MurNAc-pentapeptide from UDP-MurNAc-pentapeptide onto the lipid carrier undecaprenyl phosphate, yielding undecaprenyl-pyrophosphoryl-MurNAc-pentapeptide, known as lipid I. In Streptococcus pyogenes serotype M5 (strain Manfredo), this protein is Phospho-N-acetylmuramoyl-pentapeptide-transferase.